Here is an 859-residue protein sequence, read N- to C-terminus: Heterogeneous nuclear ribonucleoprotein U-like protein 1 (859 aa).

Residues 1–103 form a necessary for interaction with HRMT1L1 region; it reads MDVRRLKVNE…GPDGHYVMDN (103 aa). One can recognise an SAP domain in the interval 3 to 37; it reads VRRLKVNELREELQRRGLDTRGLKAELAERLLAAL. The disordered stretch occupies residues 36-131; sequence ALEAEEPEDE…SSYDRRPLDM (96 aa). Positions 38-54 are enriched in acidic residues; sequence EAEEPEDERELEADDDP. Residues 77–88 show a composition bias toward pro residues; that stretch reads QPPPPGLQPHPE. A Glycyl lysine isopeptide (Lys-Gly) (interchain with G-Cter in SUMO1); alternate cross-link involves residue Lys-117. Residue Lys-117 forms a Glycyl lysine isopeptide (Lys-Gly) (interchain with G-Cter in SUMO2); alternate linkage. Residues 118–130 show a composition bias toward basic and acidic residues; the sequence is QENESSYDRRPLD. Lys-143 participates in a covalent cross-link: Glycyl lysine isopeptide (Lys-Gly) (interchain with G-Cter in SUMO1); alternate. A Glycyl lysine isopeptide (Lys-Gly) (interchain with G-Cter in SUMO2); alternate cross-link involves residue Lys-143. The disordered stretch occupies residues 146–206; that stretch reads MKQEAPPSFL…QPPAEEDEDD (61 aa). Residues Lys-147 and Lys-163 each participate in a glycyl lysine isopeptide (Lys-Gly) (interchain with G-Cter in SUMO2) cross-link. Basic and acidic residues predominate over residues 174 to 193; that stretch reads RPFEENRGRGYFEHREDRRG. The B30.2/SPRY domain occupies 192–389; it reads RGRSPQPPAE…VEFNFGQRAE (198 aa). Ser-195 carries the phosphoserine modification. Thr-210 is modified (phosphothreonine). The tract at residues 214–859 is necessary for interaction with TP53; that stretch reads IDTYNCDLHF…GSTQGGTSTQ (646 aa). Residues Lys-271 and Lys-450 each participate in a glycyl lysine isopeptide (Lys-Gly) (interchain with G-Cter in SUMO2) cross-link. The interval 457 to 595 is necessary for interaction with BRD7 and transcriptional activation; sequence NAIMDKMRVM…EEADKLVRQY (139 aa). Ser-513 is subject to Phosphoserine. A Glycyl lysine isopeptide (Lys-Gly) (interchain with G-Cter in SUMO2) cross-link involves residue Lys-540. Basic and acidic residues predominate over residues 595 to 612; sequence YNEEGRKAGPPPEKRFDS. Positions 595-814 are disordered; the sequence is YNEEGRKAGP…PPTAQTYPQP (220 aa). 5 tandem repeats follow at residues 613-615, 620-622, 639-641, 645-647, and 659-661. Composition is skewed to gly residues over residues 613–626 and 634–670; these read RGGG…GGGF and PPGG…GGGY. Residues 613–661 form a 5 X 3 AA repeats of R-G-G region; that stretch reads RGGGFRGRGGGGGFQRYDNRGPPGGNRGGFQNRGGGGGSGGGGGNYRGG. Residues 613–661 form a necessary for transcription repression region; that stretch reads RGGGFRGRGGGGGFQRYDNRGPPGGNRGGFQNRGGGGGSGGGGGNYRGG. Residue Arg-639 is modified to Asymmetric dimethylarginine. Asymmetric dimethylarginine; alternate is present on residues Arg-645 and Arg-659. Omega-N-methylarginine; alternate occurs at positions 645 and 659. Arg-664 and Arg-674 each carry omega-N-methylarginine. Residues 671–696 are compositionally biased toward low complexity; sequence NQNRWGNNNRDNNNSNNRGNYNRAPQ. Positions 697–720 are enriched in pro residues; it reads QQPPPQQPPPPQPPPQQPPPPPSY. Residue Ser-721 is modified to Phosphoserine. Polar residues predominate over residues 728 to 744; it reads GASSYNKNSNIPGSSAN. Residues 745 to 775 are compositionally biased toward low complexity; sequence TSTPTVSSYTPPQPSYSQPPYNQGGYTQGYT. 2 stretches are compositionally biased toward pro residues: residues 776 to 786 and 796 to 807; these read APPPPPPPPPA and NPAPYTPPPPPT.

In terms of assembly, interacts with BRD7, PRMT2, TP53 and NXF1. Associates with histones and BRD7. Methylated.

It localises to the nucleus. In terms of biological role, acts as a basic transcriptional regulator. Represses basic transcription driven by several virus and cellular promoters. When associated with BRD7, activates transcription of glucocorticoid-responsive promoter in the absence of ligand-stimulation. Also plays a role in mRNA processing and transport. Binds avidly to poly(G) and poly(C) RNA homopolymers in vitro. The polypeptide is Heterogeneous nuclear ribonucleoprotein U-like protein 1 (Hnrnpul1) (Mus musculus (Mouse)).